The following is a 420-amino-acid chain: Transcription factor IIIB 50 kDa subunit (420 aa).

The segment at 3-36 (NGSRCPDCGSSELVEDSHYSQSQLVCSDCGCVVT) adopts a TFIIB-type zinc-finger fold. 4 residues coordinate Zn(2+): C7, C10, C28, and C31. 2 tandem repeats follow at residues 72 to 157 (DLRR…MQMV) and 173 to 249 (VKSY…SLAQ). Positions 108–114 (AARLQKK) are interaction with target DNA. The tract at residues 316-387 (TAEVETQQQQ…AVTGDEDISD (72 aa)) is disordered. Positions 322 to 336 (QQQQQQQQGQGQGQQ) are enriched in low complexity. Phosphoserine is present on S354. A required for the formation of a ternary complex with DNA and TBP; not required for interaction with TBP in the absence of DNA region spans residues 358 to 364 (LLPPCML). At C362 the chain carries Cysteine sulfenic acid (-SOH). The segment at 366–420 (PPKRTHTLPPESAVTGDEDISDSEIEQYLRTPQEVRDFERAQAASQAAMRVPNPP) is required for interaction with TBP and formation of a ternary complex with DNA and TBP.

Belongs to the TFIIB family. Component of TFIIIB complexes. The TFIIIB complex has two activities, alpha and beta. The TFIIIB-alpha activity complex is composed of TBP, BDP1, and a complex containing both BRF2 and at least four stably associated proteins; this complex inhibits the transcription by pol III via its phosphorylation by CK2; YY1 facilitates the TFIIIB-alpha complex formation. Interacts with TBP; this interaction promotes recruitment of BRF2 to TATA box-containing promoters. Interacts with TBP and the BURE sequence (GC-rich sequence downstream from the TATA box) to form a strong ternary complex which is joined by BDP1; this ternary complex stimulates pol III transcription. Forms a trimeric complex composed of TBP, BRF2 and mini-SNAPc complex (SNAP43, SNAP50, and the N-terminal third of SNAP190) on the promoter. Assembly of the TBP-BRF2 complex is stimulated by SNAP190. Interacts with MAF1 and SNAPC4. Post-translationally, in response to oxidative stress, Cys-362 is reversibly oxidized to cysteine sulfenic acid. Oxidation of Cys-362 impairs formation of a ternary complex with TBP and DNA and down-regulates expression of target genes in response to oxidative stress.

It is found in the nucleus. General activator of RNA polymerase III transcription. Factor exclusively required for RNA polymerase III transcription of genes with promoter elements upstream of the initiation sites. Contributes to the regulation of gene expression; functions as activator in the absence of oxidative stress. Down-regulates expression of target genes in response to oxidative stress. Overexpression protects cells against apoptosis in response to oxidative stress. The sequence is that of Transcription factor IIIB 50 kDa subunit (Brf2) from Mus musculus (Mouse).